The following is a 253-amino-acid chain: Major prion protein (253 aa).

An N-terminal signal peptide occupies residues 1 to 22; the sequence is MANLGCWMLVLFVATWSDLGLC. The interval 23–38 is interaction with ADGRG6; that stretch reads KKRPKPGGWNTGGSRY. An interaction with GRB2, ERI3 and SYN1 region spans residues 23 to 230; that stretch reads KKRPKPGGWN…ESQAYYQRGS (208 aa). The interval 26–108 is disordered; that stretch reads PKPGGWNTGG…WNKPSKPKTS (83 aa). Tandem repeats lie at residues 51–59, 60–67, 68–75, 76–83, and 84–91. Positions 51 to 91 are 5 X 8 AA tandem repeats of P-H-G-G-G-W-G-Q; the sequence is PQGGGGWGQPHGGGWGQPHGGGWGQPHGGGWGQPHGGGWGQ. Residues 52–95 are compositionally biased toward gly residues; sequence QGGGGWGQPHGGGWGQPHGGGWGQPHGGGWGQPHGGGWGQGGGT. His-61, Gly-62, Gly-63, His-69, Gly-70, Gly-71, His-77, Gly-78, Gly-79, His-85, Gly-86, and Gly-87 together coordinate Cu(2+). Cys-179 and Cys-214 are oxidised to a cystine. Residues Asn-181 and Asn-197 are each glycosylated (N-linked (GlcNAc...) asparagine). The GPI-anchor amidated serine moiety is linked to residue Ser-230. A propeptide spans 231–253 (removed in mature form); the sequence is SMVLFSSPPVILLISFLIFLIVG.

The protein belongs to the prion family. In terms of assembly, monomer and homodimer. Has a tendency to aggregate into amyloid fibrils containing a cross-beta spine, formed by a steric zipper of superposed beta-strands. Soluble oligomers may represent an intermediate stage on the path to fibril formation. Copper binding may promote oligomerization. Interacts with GRB2, APP, ERI3/PRNPIP and SYN1. Mislocalized cytosolically exposed PrP interacts with MGRN1; this interaction alters MGRN1 subcellular location and causes lysosomal enlargement. Interacts with APP. Interacts with KIAA1191. Interacts with ADGRG6.

Its subcellular location is the cell membrane. It localises to the golgi apparatus. Its function is as follows. Its primary physiological function is unclear. May play a role in neuronal development and synaptic plasticity. May be required for neuronal myelin sheath maintenance. May promote myelin homeostasis through acting as an agonist for ADGRG6 receptor. May play a role in iron uptake and iron homeostasis. Soluble oligomers are toxic to cultured neuroblastoma cells and induce apoptosis (in vitro). Association with GPC1 (via its heparan sulfate chains) targets PRNP to lipid rafts. Also provides Cu(2+) or Zn(2+) for the ascorbate-mediated GPC1 deaminase degradation of its heparan sulfate side chains. The sequence is that of Major prion protein (PRNP) from Colobus guereza (Mantled guereza).